The chain runs to 153 residues: RNA-binding protein OPG065 (153 aa).

The region spanning 1–33 (MEKREVNKALYDLQRSAMVYSSNDTPPRWSTTM) is the Z-binding domain. Over residues 22-34 (SNDTPPRWSTTMD) the composition is skewed to polar residues. A disordered region spans residues 22-44 (SNDTPPRWSTTMDADTRPTDSDA). In terms of domain architecture, DRBM spans 80-147 (NPVTVINEYC…AKLAVDKLLS (68 aa)).

This sequence belongs to the orthopoxvirus OPG065 family. In terms of assembly, interacts with host G1P2/ISG15. Interacts with host EIF2AK2/PKR. Interacts with host ZBP1.

Its function is as follows. RNA-binding protein that plays a role in the inhibition of multiple cellular antiviral responses activated by double-stranded RNA (dsRNA), such as inhibition of PKR activation, necroptosis, and IFN-mediated antiviral activities. Recognizes and binds Z-RNA structures via its Z-binding domain and dsRNA via its DRBM domain: RNA-binding activity is required to escape host ZBP1-dependent necroptosis. Mechanistically, the Z-binding domain binds Z-RNAs that are produced during vaccinia virus infection, thereby competing with Z-RNA detection by host ZBP1, suppressing ZBP1-dependent necroptosis. Acts as a key inhibitor of the interferon response by blocking the phosphorylation and subsequent activation of IRF3 and IRF7 kinases that are required for interferon-alpha gene expression. Inhibits NF-kappa-B activation and the ubiquitin-like protein ISG15, which is an early antiviral protein. The binding with host ISG15 subsequently blocks host ISGylation. The chain is RNA-binding protein OPG065 (OPG065) from Monkeypox virus.